A 367-amino-acid chain; its full sequence is Phosphoribosylaminoimidazole-succinocarboxamide synthase (367 aa).

This sequence belongs to the SAICAR synthetase family.

It catalyses the reaction 5-amino-1-(5-phospho-D-ribosyl)imidazole-4-carboxylate + L-aspartate + ATP = (2S)-2-[5-amino-1-(5-phospho-beta-D-ribosyl)imidazole-4-carboxamido]succinate + ADP + phosphate + 2 H(+). The protein operates within purine metabolism; IMP biosynthesis via de novo pathway; 5-amino-1-(5-phospho-D-ribosyl)imidazole-4-carboxamide from 5-amino-1-(5-phospho-D-ribosyl)imidazole-4-carboxylate: step 1/2. The polypeptide is Phosphoribosylaminoimidazole-succinocarboxamide synthase (Shewanella baltica (strain OS185)).